A 706-amino-acid polypeptide reads, in one-letter code: Probable rhamnogalacturonate lyase B (706 aa).

Positions 1 to 19 (MRLLHPLIPASLLLTLTSA) are cleaved as a signal peptide. Asn-27, Asn-40, Asn-143, Asn-239, Asn-285, Asn-380, Asn-495, Asn-569, Asn-597, and Asn-638 each carry an N-linked (GlcNAc...) asparagine glycan.

It belongs to the polysaccharide lyase 4 family.

The protein localises to the secreted. The enzyme catalyses Endotype eliminative cleavage of L-alpha-rhamnopyranosyl-(1-&gt;4)-alpha-D-galactopyranosyluronic acid bonds of rhamnogalacturonan I domains in ramified hairy regions of pectin leaving L-rhamnopyranose at the reducing end and 4-deoxy-4,5-unsaturated D-galactopyranosyluronic acid at the non-reducing end.. Functionally, pectinolytic enzymes consist of four classes of enzymes: pectin lyase, polygalacturonase, pectin methylesterase and rhamnogalacturonase. Degrades the rhamnogalacturonan I (RG-I) backbone of pectin. The sequence is that of Probable rhamnogalacturonate lyase B (rglB) from Aspergillus niger (strain ATCC MYA-4892 / CBS 513.88 / FGSC A1513).